A 746-amino-acid polypeptide reads, in one-letter code: MQAKKRYFILLSAGSCLALLFYFGGLQFRASRSHSRREEHSGRNGLHHPSPDHFWPRFPDALRPFVPWDQLENEDSSVHVSPRQKREANSSIYKGKKCRMESCFDFTLCKKNGFKVYVYPQQKGEKIAESYQNILAAIEGSRFYTSDPSQACLFVLSLDTLDRDQLSPQYVHNLRSKVQSLHLWNNGRNHLIFNLYSGTWPDYTEDVGFDIGQAMLAKASISTENFRPNFDVSIPLFSKDHPRTGGERGFLKFNTIPPLRKYMLVFKGKRYLTGIGSDTRNALYHVHNGEDVVLLTTCKHGKDWQKHKDSRCDRDNTEYEKYDYREMLHNATFCLVPRGRRLGSFRFLEALQAACVPVMLSNGWELPFSEVINWNQAAVIGDERLLLQIPSTIRSIHQDKILALRQQTQFLWEAYFSSVEKIVLTTLEIIQDRIFKHISRNSLIWNKHPGGLFVLPQYSSYLGDFPYYYANLGLKPPSKFTAVIHAVTPLVSQSQPVLKLLVAAAKSQYCAQIIVLWNCDKPLPAKHRWPATSVPVIVIEGESKVMSSRFLPYDNIITDAVLSLDEDTVLSTTEVDFAFTVWQSFPERIVGYPARSHFWDNSKERWGYTSKWTNDYSMVLTGAAIYHKYYHYLYTHYLPASLKNMVDQLANCEDILMNFLVSAVTKLPPIKVTQKKQYKETMMGQTSRASRWADPDHFAQRQSCMNTFASWFGYMPLIHSQMRLDPVLFKDQVSILRKKYRDIERL.

Topologically, residues 1 to 7 (MQAKKRY) are cytoplasmic. Residues 8–28 (FILLSAGSCLALLFYFGGLQF) traverse the membrane as a helical; Signal-anchor for type II membrane protein segment. Topologically, residues 29 to 746 (RASRSHSRRE…RKKYRDIERL (718 aa)) are lumenal. Asparagine 89 carries N-linked (GlcNAc...) asparagine glycosylation. 2 disulfides stabilise this stretch: cysteine 98/cysteine 103 and cysteine 109/cysteine 152. Residues leucine 166 and tyrosine 203 each contribute to the a protein site. Residues lysine 267, lysine 269, tyrosine 271, and arginine 280 each coordinate UDP. Cysteine 298 and cysteine 312 are disulfide-bonded. Position 300 (histidine 300) interacts with a protein. 2 residues coordinate UDP: tyrosine 319 and tyrosine 324. N-linked (GlcNAc...) asparagine glycosylation is present at asparagine 330. Disulfide bonds link cysteine 334–cysteine 355 and cysteine 652–cysteine 704. UDP is bound by residues arginine 346 and glutamate 349.

The protein belongs to the glycosyltransferase 47 family. As to quaternary structure, part of the heparan sulfate polymerase, a dimeric complex composed of EXT1 and EXT2. Could also form homooligomeric complexes. Interacts with NDST1. N-glycosylated.

The protein localises to the golgi apparatus membrane. It is found in the golgi apparatus. Its subcellular location is the cis-Golgi network membrane. It localises to the endoplasmic reticulum membrane. It catalyses the reaction 3-O-{alpha-D-GlcNAc-[(1-&gt;4)-beta-D-GlcA-(1-&gt;4)-alpha-D-GlcNAc](n)-(1-&gt;4)-beta-D-GlcA-(1-&gt;3)-beta-D-Gal-(1-&gt;3)-beta-D-Gal-(1-&gt;4)-beta-D-Xyl}-L-seryl-[protein] + UDP-alpha-D-glucuronate = 3-O-{[(1-&gt;4)-beta-D-GlcA-(1-&gt;4)-alpha-D-GlcNAc](n+1)-(1-&gt;4)-beta-D-GlcA-(1-&gt;3)-beta-D-Gal-(1-&gt;3)-beta-D-Gal-(1-&gt;4)-beta-D-Xyl}-L-seryl-[protein] + UDP + H(+). The protein operates within protein modification; protein glycosylation. Functionally, glycosyltransferase forming with EXT2 the heterodimeric heparan sulfate polymerase which catalyzes the elongation of the heparan sulfate glycan backbone. Glycan backbone extension consists in the alternating transfer of (1-&gt;4)-beta-D-GlcA and (1-&gt;4)-alpha-D-GlcNAc residues from their respective UDP-sugar donors. Both EXT1 and EXT2 are required for the full activity of the polymerase since EXT1 bears the N-acetylglucosaminyl-proteoglycan 4-beta-glucuronosyltransferase activity within the complex while EXT2 carries the glucuronosyl-N-acetylglucosaminyl-proteoglycan 4-alpha-N-acetylglucosaminyltransferase activity. Heparan sulfate proteoglycans are ubiquitous components of the extracellular matrix and play an important role in tissue homeostasis and signaling. This Bos taurus (Bovine) protein is Exostosin-1 (EXT1).